The primary structure comprises 506 residues: Probable malate:quinone oxidoreductase (506 aa).

It belongs to the MQO family. The cofactor is FAD.

The enzyme catalyses (S)-malate + a quinone = a quinol + oxaloacetate. Its pathway is carbohydrate metabolism; tricarboxylic acid cycle; oxaloacetate from (S)-malate (quinone route): step 1/1. The sequence is that of Probable malate:quinone oxidoreductase from Rhodococcus jostii (strain RHA1).